A 254-amino-acid polypeptide reads, in one-letter code: Type III pantothenate kinase (254 aa).

7–14 lines the ATP pocket; sequence DVGNTRLK. Residues Tyr-96 and 103–106 each bind substrate; that span reads GSDR. Catalysis depends on Asp-105, which acts as the Proton acceptor. Thr-133 serves as a coordination point for ATP. Thr-183 is a binding site for substrate.

Belongs to the type III pantothenate kinase family. As to quaternary structure, homodimer. NH4(+) is required as a cofactor. It depends on K(+) as a cofactor.

The protein resides in the cytoplasm. The catalysed reaction is (R)-pantothenate + ATP = (R)-4'-phosphopantothenate + ADP + H(+). It functions in the pathway cofactor biosynthesis; coenzyme A biosynthesis; CoA from (R)-pantothenate: step 1/5. Its function is as follows. Catalyzes the phosphorylation of pantothenate (Pan), the first step in CoA biosynthesis. The chain is Type III pantothenate kinase from Paracidovorax citrulli (strain AAC00-1) (Acidovorax citrulli).